The sequence spans 207 residues: Large ribosomal subunit protein uL4 (207 aa).

The segment at 48 to 78 is disordered; sequence THKVKTRSEVRGGGRKPWRQKGTGRARQGSI. Basic residues predominate over residues 60–71; sequence GGRKPWRQKGTG.

The protein belongs to the universal ribosomal protein uL4 family. As to quaternary structure, part of the 50S ribosomal subunit.

Functionally, one of the primary rRNA binding proteins, this protein initially binds near the 5'-end of the 23S rRNA. It is important during the early stages of 50S assembly. It makes multiple contacts with different domains of the 23S rRNA in the assembled 50S subunit and ribosome. Its function is as follows. Forms part of the polypeptide exit tunnel. This Bacillus pumilus (strain SAFR-032) protein is Large ribosomal subunit protein uL4.